A 310-amino-acid chain; its full sequence is Solute carrier family 25 member 47 (310 aa).

Solcar repeat units lie at residues 1–80 (MDFV…CLAH), 93–208 (PTKA…LSEW), and 217–304 (PDVL…VLRL). Transmembrane regions (helical) follow at residues 3–23 (FVAGAIGGVCGVAVGYPLDTV), 49–69 (LWGFYRGLSLPVCTVSLVSSV), 98–116 (ITLSGCASGLVRVFLTSPT), 192–212 (GHSFATYFLSYAVLSEWLTPA), 219–239 (VLGVLVAGGCAGVLAWAVATP), and 275–295 (VLFKGLALNCCRAFPVNMVVF).

Belongs to the mitochondrial carrier (TC 2.A.29) family.

Its subcellular location is the mitochondrion inner membrane. It localises to the mitochondrion outer membrane. The catalysed reaction is NAD(+)(in) = NAD(+)(out). It catalyses the reaction acetyl-CoA(in) = acetyl-CoA(out). Functionally, mitochondrial NAD(+) transporter that acts as a 'metabolic gate' in hepatic lipogenesis. Provides NAD(+) substrate to mitochondrial SIRT3 deacetylase and enables its NAD(+)-dependent activities in mitochondrial energy metabolism. This triggers downstream activation of PRKAA1/AMPK-alpha signaling cascade that negatively regulates sterol regulatory element-binding protein (SREBP) transcriptional activities and ATP-consuming lipogenesis to restore cellular energy balance. May transport other mitochondrial metabolites having an aromatic nucleotide and phosphate groups, such as acetyl-CoA. Does not transport amino acids. The transport mechanism remains to be elucidated. This chain is Solute carrier family 25 member 47, found in Rattus norvegicus (Rat).